Reading from the N-terminus, the 441-residue chain is Lysine histidine transporter 2 (441 aa).

Over 1-32 the chain is Cytoplasmic; it reads MGNSEMSASEVAAAKQKNVDDWLPITSSRNAK. A helical membrane pass occupies residues 33 to 53; sequence WWYSAFHNVTAMVGAGVLSLP. Over 54 to 58 the chain is Extracellular; it reads YAMSN. A helical transmembrane segment spans residues 59–79; that stretch reads LGWGPGVTIMVMSWIITLYTL. Over 80–110 the chain is Cytoplasmic; it reads WQMVEMHEIVPGKRLDRYHELGQHAFGEKLG. A helical transmembrane segment spans residues 111–131; that stretch reads LWIVVPQQLIVEVGVDIVYMV. The Extracellular portion of the chain corresponds to 132-152; the sequence is TGGASLKKVHQLVCPDCKEIR. Residues 153-173 traverse the membrane as a helical segment; that stretch reads TTFWIMIFASVHFVISHLPNF. Topologically, residues 174-175 are cytoplasmic; it reads NS. A helical transmembrane segment spans residues 176-196; sequence ISIISLAAAVMSLTYSTIAWA. At 197–222 the chain is on the extracellular side; it reads ASVHKGVHPDVDYSPRASTDVGKVFN. The chain crosses the membrane as a helical span at residues 223–243; that stretch reads FLNALGDVAFAYAGHNVVLEI. At 244 to 263 the chain is on the cytoplasmic side; that stretch reads QATIPSTPEMPSKVPMWRGV. A helical membrane pass occupies residues 264–284; the sequence is IVAYIVVAICYFPVAFLGYYI. Over 285-300 the chain is Extracellular; the sequence is FGNSVDDNILITLEKP. Residues 301 to 321 traverse the membrane as a helical segment; that stretch reads IWLIAMANMFVVIHVIGSYQI. The Cytoplasmic segment spans residues 322–347; the sequence is FAMPVFDMLETVLVKKMNFNPSFKLR. Residues 348 to 370 traverse the membrane as a helical segment; it reads FITRSLYVAFTMIVAICVPFFGG. Residues 371–373 are Extracellular-facing; the sequence is LLG. Residues 374–396 traverse the membrane as a helical segment; that stretch reads FFGGFAFAPTTYYLPCIMWLVLK. Residues 397-406 lie on the Cytoplasmic side of the membrane; it reads KPKRFGLSWT. A helical membrane pass occupies residues 407 to 427; the sequence is ANWFCIIVGVLLTILAPIGGL. The Extracellular portion of the chain corresponds to 428-441; that stretch reads RTIIINAKTYKFFS.

This sequence belongs to the amino acid/polyamine transporter 2 family. Amino acid/auxin permease (AAAP) (TC 2.A.18.2) subfamily. As to expression, expressed in flower buds and to lower levels in leaves and stems. Not detected in roots and siliques. Restricted to the tapetum cell layer.

Its subcellular location is the cell membrane. With respect to regulation, inhibited by diethylstibestrol (DES), 2,4-dinitrophenol (DNP) and carbonlycyanide m-chlorophenylhydrazone (CCCP). Amino acid-proton symporter. Transporter with a broad specificity for neutral and acidic amino acids. Basic amino acids are only marginally transported. Involved in import of amino acids into the tapetum cells for synthesis of compounds important for microspore structure. The protein is Lysine histidine transporter 2 (LHT2) of Arabidopsis thaliana (Mouse-ear cress).